Here is a 65-residue protein sequence, read N- to C-terminus: Large ribosomal subunit protein bL35 (65 aa).

This sequence belongs to the bacterial ribosomal protein bL35 family.

This is Large ribosomal subunit protein bL35 from Thermoanaerobacter sp. (strain X514).